The primary structure comprises 256 residues: Protein YABBY 4 (256 aa).

Residues 30 to 57 (CNCCDTILAVGVPCSSLFKTVTVRCGHC) form a C4-type zinc finger. The disordered stretch occupies residues 127–168 (SCASNAPAMQMPPAKPVQQEPELPKNAPASANRPPEKRQRVP).

The protein belongs to the YABBY family. As to expression, preferentially expressed in immature organs containing meristems and organ primordia. Expressed in phloem of developing vascular tissues of young seedling shoots. Expressed in the phloem of midvein vasculature of young leaves. Does not show polar expression pattern in leaf primordia.

It localises to the nucleus. Seems to be associated with phloem cell differentiation. The polypeptide is Protein YABBY 4 (YAB4) (Oryza sativa subsp. japonica (Rice)).